Reading from the N-terminus, the 286-residue chain is ATP synthase gamma chain (286 aa).

The protein belongs to the ATPase gamma chain family. F-type ATPases have 2 components, CF(1) - the catalytic core - and CF(0) - the membrane proton channel. CF(1) has five subunits: alpha(3), beta(3), gamma(1), delta(1), epsilon(1). CF(0) has three main subunits: a, b and c.

Its subcellular location is the cell membrane. In terms of biological role, produces ATP from ADP in the presence of a proton gradient across the membrane. The gamma chain is believed to be important in regulating ATPase activity and the flow of protons through the CF(0) complex. The polypeptide is ATP synthase gamma chain (Ruminococcus albus (strain ATCC 27210 / DSM 20455 / JCM 14654 / NCDO 2250 / 7)).